The following is a 578-amino-acid chain: 65-kDa microtubule-associated protein 2 (578 aa).

Coiled-coil stretches lie at residues 64-84, 151-184, 235-257, 290-312, and 461-489; these read AELL…TTAL, DETD…VLEF, TLKE…LTDL, ALAL…LKSS, and AMLD…QQEQ. The span at 473 to 494 shows a compositional bias: basic and acidic residues; the sequence is REDEKRRLKEQKKQQEQPHTDQ. Residues 473 to 578 form a disordered region; the sequence is REDEKRRLKE…SRADPVMASP (106 aa). Residues serine 503 and serine 532 each carry the phosphoserine modification. Positions 549–558 are enriched in polar residues; that stretch reads KIASPSNIVA. 3 positions are modified to phosphoserine: serine 566, serine 569, and serine 577.

The protein belongs to the MAP65/ASE1 family. In terms of assembly, forms a dimer. Binds to microtubules (MT). Bundles polymerized MT via the formation of 25-nm crossbridges with centrally located endocytic MT.

It localises to the nucleus. The protein resides in the cytoplasm. Its subcellular location is the cytoskeleton. The protein localises to the spindle pole. It is found in the phragmoplast. Its function is as follows. Microtubule-associated protein that stabilize microtubules (MT). Involved in the regulation of MT organization and dynamics. Confers MT resistance to the drug propyzamide and cold conditions. This Arabidopsis thaliana (Mouse-ear cress) protein is 65-kDa microtubule-associated protein 2 (MAP65-2).